The chain runs to 188 residues: Adenine phosphoribosyltransferase (188 aa).

It belongs to the purine/pyrimidine phosphoribosyltransferase family. In terms of assembly, homodimer.

It is found in the cytoplasm. It catalyses the reaction AMP + diphosphate = 5-phospho-alpha-D-ribose 1-diphosphate + adenine. The protein operates within purine metabolism; AMP biosynthesis via salvage pathway; AMP from adenine: step 1/1. Catalyzes a salvage reaction resulting in the formation of AMP, that is energically less costly than de novo synthesis. The polypeptide is Adenine phosphoribosyltransferase (Burkholderia orbicola (strain MC0-3)).